Here is a 185-residue protein sequence, read N- to C-terminus: NADH-dependent FMN reductase AsuE2 (185 aa).

The segment covering 1-13 (MSTHTARRAGATA) has biased composition (low complexity). The tract at residues 1–24 (MSTHTARRAGATAGHDRDRGTEPG) is disordered. Residues 14–24 (GHDRDRGTEPG) are compositionally biased toward basic and acidic residues.

Belongs to the non-flavoprotein flavin reductase family. Does not interact with AsuE1, suggesting a possible transient interaction between the two enzymes instead of formation of a stable complex.

It carries out the reaction FMNH2 + NAD(+) = FMN + NADH + 2 H(+). The protein operates within antibiotic biosynthesis. Involved in the biosynthesis of the antibiotic asukamycin. When flavin concentration is low, AsuE2 assists the protoasukamycin 4-monooxygenase AsuE1 by providing a reduced form of flavin, enhancing AsuE1 activity. The chain is NADH-dependent FMN reductase AsuE2 from Streptomyces nodosus subsp. asukaensis.